The chain runs to 124 residues: Quinol oxidase subunit 4 (124 aa).

3 consecutive transmembrane segments (helical) span residues 16–36 (IVGFILSIVLTLLALWVAVYT), 44–64 (LWIIFGFAFIQAALQLLMFMH), and 78–98 (TLFGFFGAIVIVLGSIWIFAA).

Belongs to the cytochrome c oxidase bacterial subunit 4 family.

It is found in the cell membrane. It catalyses the reaction 2 a quinol + O2 = 2 a quinone + 2 H2O. Catalyzes quinol oxidation with the concomitant reduction of oxygen to water. Major component for energy conversion during vegetative growth. This chain is Quinol oxidase subunit 4 (qoxD), found in Bacillus subtilis (strain 168).